The primary structure comprises 141 residues: Large-conductance mechanosensitive channel (141 aa).

Helical transmembrane passes span 14–34 (VVDL…VNSL), 38–58 (VIMP…YYIP), and 82–102 (GQFL…FMVI).

Belongs to the MscL family. As to quaternary structure, homopentamer.

The protein localises to the cell inner membrane. In terms of biological role, channel that opens in response to stretch forces in the membrane lipid bilayer. May participate in the regulation of osmotic pressure changes within the cell. This chain is Large-conductance mechanosensitive channel, found in Methylorubrum extorquens (strain CM4 / NCIMB 13688) (Methylobacterium extorquens).